We begin with the raw amino-acid sequence, 882 residues long: Putative HTH-type transcriptional regulator Mb0914c (882 aa).

The HTH luxR-type domain maps to proline 814 to glycine 879. A DNA-binding region (H-T-H motif) is located at residues asparagine 838–threonine 857.

In Mycobacterium bovis (strain ATCC BAA-935 / AF2122/97), this protein is Putative HTH-type transcriptional regulator Mb0914c.